Here is a 452-residue protein sequence, read N- to C-terminus: Protein CSN12 homolog (452 aa).

Positions 249–446 (VTFKYYEGVL…GFVVLSKSGA (198 aa)) constitute a PCI domain.

This sequence belongs to the CSN12 family.

This is Protein CSN12 homolog (csn-8) from Neurospora crassa (strain ATCC 24698 / 74-OR23-1A / CBS 708.71 / DSM 1257 / FGSC 987).